Reading from the N-terminus, the 220-residue chain is Thiamine-phosphate synthase (220 aa).

4-amino-2-methyl-5-(diphosphooxymethyl)pyrimidine-binding positions include 39 to 43 (QLRDK) and Asn-80. Residues Asp-81 and Asp-100 each coordinate Mg(2+). Ser-119 serves as a coordination point for 4-amino-2-methyl-5-(diphosphooxymethyl)pyrimidine. A 2-[(2R,5Z)-2-carboxy-4-methylthiazol-5(2H)-ylidene]ethyl phosphate-binding site is contributed by 145–147 (TPT). Lys-148 lines the 4-amino-2-methyl-5-(diphosphooxymethyl)pyrimidine pocket. Gly-176 contacts 2-[(2R,5Z)-2-carboxy-4-methylthiazol-5(2H)-ylidene]ethyl phosphate.

Belongs to the thiamine-phosphate synthase family. The cofactor is Mg(2+).

It catalyses the reaction 2-[(2R,5Z)-2-carboxy-4-methylthiazol-5(2H)-ylidene]ethyl phosphate + 4-amino-2-methyl-5-(diphosphooxymethyl)pyrimidine + 2 H(+) = thiamine phosphate + CO2 + diphosphate. It carries out the reaction 2-(2-carboxy-4-methylthiazol-5-yl)ethyl phosphate + 4-amino-2-methyl-5-(diphosphooxymethyl)pyrimidine + 2 H(+) = thiamine phosphate + CO2 + diphosphate. The enzyme catalyses 4-methyl-5-(2-phosphooxyethyl)-thiazole + 4-amino-2-methyl-5-(diphosphooxymethyl)pyrimidine + H(+) = thiamine phosphate + diphosphate. It participates in cofactor biosynthesis; thiamine diphosphate biosynthesis; thiamine phosphate from 4-amino-2-methyl-5-diphosphomethylpyrimidine and 4-methyl-5-(2-phosphoethyl)-thiazole: step 1/1. Its function is as follows. Condenses 4-methyl-5-(beta-hydroxyethyl)thiazole monophosphate (THZ-P) and 2-methyl-4-amino-5-hydroxymethyl pyrimidine pyrophosphate (HMP-PP) to form thiamine monophosphate (TMP). The chain is Thiamine-phosphate synthase from Mycobacterium marinum (strain ATCC BAA-535 / M).